The chain runs to 394 residues: Probable pectate lyase 16 (394 aa).

Residues 1–22 (MTLFTVSCLLVVLFLCHSLVHA) form the signal peptide. The Ca(2+) site is built by D192, D216, and D220. R272 is an active-site residue.

This sequence belongs to the polysaccharide lyase 1 family. Ca(2+) is required as a cofactor.

It carries out the reaction Eliminative cleavage of (1-&gt;4)-alpha-D-galacturonan to give oligosaccharides with 4-deoxy-alpha-D-galact-4-enuronosyl groups at their non-reducing ends.. It functions in the pathway glycan metabolism; pectin degradation; 2-dehydro-3-deoxy-D-gluconate from pectin: step 2/5. The sequence is that of Probable pectate lyase 16 from Arabidopsis thaliana (Mouse-ear cress).